Here is a 1011-residue protein sequence, read N- to C-terminus: Cell division cycle-associated protein 2 (1011 aa).

Residues 1-22 (MDTCSQESEPLQTKESPINNAG) show a composition bias toward polar residues. Residues 1–26 (MDTCSQESEPLQTKESPINNAGKTPL) form a disordered region. Phosphoserine occurs at positions 125, 130, 209, 293, and 310. A Phosphothreonine modification is found at Thr313. Residues 380 to 440 (KRKRVTFGED…PEWLPQPNFD (61 aa)) enclose the PP1-binding domain. A phosphoserine mark is found at Ser391 and Ser398. 2 disordered regions span residues 395 to 438 (LDES…PQPN) and 522 to 544 (PCKEKKTNRRKSQESKHADKVLP). Thr403 is subject to Phosphothreonine. Residues 418 to 431 (SSLSPPLLEQSPVP) show a composition bias toward low complexity. Phosphoserine is present on Ser428. A compositionally biased stretch (basic and acidic residues) spans 522–543 (PCKEKKTNRRKSQESKHADKVL). Phosphoserine is present on residues Ser583, Ser702, and Ser747. Lys753 participates in a covalent cross-link: Glycyl lysine isopeptide (Lys-Gly) (interchain with G-Cter in SUMO2). Over residues 790 to 803 (DQRKVSKSQGEDLG) the composition is skewed to basic and acidic residues. 2 disordered regions span residues 790–835 (DQRK…GLHL) and 896–1011 (GLVW…LSEN). Polar residues predominate over residues 931-945 (SSRQDPCTLPSTSSE). Ser967 carries the phosphoserine modification. Positions 968-983 (FCTSTLANPKSTTQSR) are enriched in polar residues. Basic and acidic residues predominate over residues 993 to 1011 (QKRENTLQETSRESDLSEN).

As to quaternary structure, interacts with PPP1CC. In terms of processing, phosphorylated by CDK1. May regulate its subcellular location.

The protein resides in the nucleus. Regulator of chromosome structure during mitosis required for condensin-depleted chromosomes to retain their compact architecture through anaphase. Acts by mediating the recruitment of phopsphatase PP1-gamma subunit (PPP1CC) to chromatin at anaphase and into the following interphase. At anaphase onset, its association with chromatin targets a pool of PPP1CC to dephosphorylate substrates. In Bos taurus (Bovine), this protein is Cell division cycle-associated protein 2 (CDCA2).